Here is a 196-residue protein sequence, read N- to C-terminus: MPIGVPKVPFRSPGEGDTSWVDIYNRLYRERLFFLGQEVDTDISNQLISLMIYLSIEKDTKDLYLFINSPGGWVISGMAIYDTMQFVRPDVQTICMGLAASIASFILVGGAITKRIAFPHARVMIHQPASSFYEAQTGEFILEAEELLKLRETITRVYVQRTGKPIWVVSEDMERDVFMSATEAQAHGIVDLVAVQ.

The active-site Nucleophile is the serine 101. Residue histidine 126 is part of the active site.

The protein belongs to the peptidase S14 family. In terms of assembly, component of the chloroplastic Clp protease core complex.

The protein localises to the plastid. It localises to the chloroplast stroma. The enzyme catalyses Hydrolysis of proteins to small peptides in the presence of ATP and magnesium. alpha-casein is the usual test substrate. In the absence of ATP, only oligopeptides shorter than five residues are hydrolyzed (such as succinyl-Leu-Tyr-|-NHMec, and Leu-Tyr-Leu-|-Tyr-Trp, in which cleavage of the -Tyr-|-Leu- and -Tyr-|-Trp bonds also occurs).. Functionally, cleaves peptides in various proteins in a process that requires ATP hydrolysis. Has a chymotrypsin-like activity. Plays a major role in the degradation of misfolded proteins. The polypeptide is ATP-dependent Clp protease proteolytic subunit (Aethionema cordifolium (Lebanon stonecress)).